The primary structure comprises 133 residues: Small ribosomal subunit protein uS9 (133 aa).

A compositionally biased stretch (basic and acidic residues) spans 97–113 (SKQELKSHGFLTRDPRK). The segment at 97–133 (SKQELKSHGFLTRDPRKKERKKYGHKKARKSFQFSKR) is disordered. Residues 114–133 (KERKKYGHKKARKSFQFSKR) show a composition bias toward basic residues.

This sequence belongs to the universal ribosomal protein uS9 family.

This is Small ribosomal subunit protein uS9 from Chlamydia abortus (strain DSM 27085 / S26/3) (Chlamydophila abortus).